The sequence spans 124 residues: Cytochrome c2 (124 aa).

Q1 carries the post-translational modification Pyrrolidone carboxylic acid. 4 residues coordinate heme c: C15, C18, H19, and M100.

Binds 1 heme c group covalently per subunit.

Its subcellular location is the periplasm. Cytochrome c2 is found mainly in purple, non-sulfur, photosynthetic bacteria where it functions as the electron donor to the oxidized bacteriochlorophyll in the photophosphorylation pathway. However, it may also have a role in the respiratory chain and is found in some non-photosynthetic bacteria. This is Cytochrome c2 (cycA) from Cereibacter sphaeroides (Rhodobacter sphaeroides).